A 476-amino-acid polypeptide reads, in one-letter code: Bridging integrator 2 (476 aa).

Positions 26-242 constitute a BAR domain; that stretch reads VLQKLGKTVE…MGKLDKQHSS (217 aa). Disordered regions lie at residues 269 to 369 and 395 to 476; these read YPCP…TEGA and GAAP…LTPL. Polar residues predominate over residues 279 to 292; that stretch reads EPSSGAEQTPTSPR. A compositionally biased stretch (pro residues) spans 310–324; that stretch reads PAEPGAPMPGPPPAS. The segment covering 325–339 has biased composition (low complexity); the sequence is PTSVRSASESESECS. Basic and acidic residues predominate over residues 340–353; the sequence is GESREIDLSPKEME. Over residues 461-476 the composition is skewed to polar residues; the sequence is VSCNPPQDPSESLTPL.

It localises to the cytoplasm. The sequence is that of Bridging integrator 2 (BIN2) from Gallus gallus (Chicken).